The following is a 438-amino-acid chain: Xylose isomerase (438 aa).

The Mg(2+) site is built by Asp-306 and Asp-308.

Belongs to the xylose isomerase family. In terms of assembly, homotetramer. It depends on Mg(2+) as a cofactor.

Its subcellular location is the cytoplasm. The catalysed reaction is alpha-D-xylose = alpha-D-xylulofuranose. The chain is Xylose isomerase from Pseudomonas fluorescens (strain SBW25).